We begin with the raw amino-acid sequence, 395 residues long: Subtilisin-like protease 9 (395 aa).

The N-terminal stretch at 1-20 (MGFFRTLFSFSIFALSLADT) is a signal peptide. Positions 21–120 (SKFIGLDDVD…ADRVVKMAAL (100 aa)) are excised as a propeptide. Positions 36 to 117 (SYIVVMKGAV…YVEADRVVKM (82 aa)) constitute an Inhibitor I9 domain. Positions 128–395 (SWGLGRISHK…RRLLYNGSGA (268 aa)) constitute a Peptidase S8 domain. Residues aspartate 160 and histidine 191 each act as charge relay system in the active site. A glycan (N-linked (GlcNAc...) asparagine) is linked at asparagine 252. The Charge relay system role is filled by serine 341. A glycan (N-linked (GlcNAc...) asparagine) is linked at asparagine 391.

It belongs to the peptidase S8 family.

It localises to the secreted. Functionally, secreted subtilisin-like serine protease with keratinolytic activity that contributes to pathogenicity. The protein is Subtilisin-like protease 9 (SUB9) of Arthroderma otae (strain ATCC MYA-4605 / CBS 113480) (Microsporum canis).